A 66-amino-acid chain; its full sequence is uncharacterized protein (66 aa).

The segment at 1–21 is disordered; the sequence is MPGGDRTGPWGQGPRTGRRAG.

This is an uncharacterized protein from Archaeoglobus fulgidus (strain ATCC 49558 / DSM 4304 / JCM 9628 / NBRC 100126 / VC-16).